We begin with the raw amino-acid sequence, 489 residues long: MSDRLNDQAQNRLQKLLNLKQTGNDPYLITKIENTHSAASFQKAFANQSDAELKQYQVILTGRIIALRQTFIIIQDFSGKMQLYINKKTAPELFEYFNNYIDLGDQIVATGHPMMTKTGVLTLNVERLQIVAKCLQTPPEKWHGLTDPEARARKRYLDLTYNRAQVEVFLKRTQIITAIRTFLNEAGFLEVETPILQAVLGGANAKPFKTHYNALKGDFYLRIANEIALKKLIVGGLPKVYEMGRMFRNEGVDTTHNPEFTSIEMYQANADYAVMMDLTENLIKFVCKTLNQWSFNWNGQTLDLAKPFKKVKMVDLICQVTGVNFDDVKDDQTAIALAKQHKVELKKHEQNKQHIINRFFEQFCEHTLIQPTFVTHYPKAVSPLAKQDPHNPEFTERFELFINTKELANAYSELNDPLEQRARFEQQLQEKRMGNDEASELDESFLDALSFGLPPTGGLGIGVDRLVMLLCECSSIRDVVFFPQLRELK.

Residues Glu-399 and Glu-406 each contribute to the Mg(2+) site.

The protein belongs to the class-II aminoacyl-tRNA synthetase family. Homodimer. The cofactor is Mg(2+).

The protein resides in the cytoplasm. The catalysed reaction is tRNA(Lys) + L-lysine + ATP = L-lysyl-tRNA(Lys) + AMP + diphosphate. The sequence is that of Lysine--tRNA ligase (lysS) from Mycoplasma pneumoniae (strain ATCC 29342 / M129 / Subtype 1) (Mycoplasmoides pneumoniae).